A 398-amino-acid chain; its full sequence is Acetate kinase (398 aa).

Residue Asn8 participates in Mg(2+) binding. Residue Lys15 participates in ATP binding. Residue Arg89 coordinates substrate. Residue Asp146 is the Proton donor/acceptor of the active site. ATP-binding positions include 206–210, 283–285, and 331–335; these read HIGNG, DMR, and GMGEN. Glu383 lines the Mg(2+) pocket.

Belongs to the acetokinase family. Homodimer. Requires Mg(2+) as cofactor. The cofactor is Mn(2+).

The protein resides in the cytoplasm. The catalysed reaction is acetate + ATP = acetyl phosphate + ADP. It participates in metabolic intermediate biosynthesis; acetyl-CoA biosynthesis; acetyl-CoA from acetate: step 1/2. Functionally, catalyzes the formation of acetyl phosphate from acetate and ATP. Can also catalyze the reverse reaction. The chain is Acetate kinase from Streptococcus pyogenes serotype M2 (strain MGAS10270).